The following is a 222-amino-acid chain: UPF0758 protein YicR (222 aa).

In terms of domain architecture, MPN spans 100-222; the sequence is PLLSPEMTRE…NVSFAERGWI (123 aa). Residues His-171, His-173, and Asp-184 each contribute to the Zn(2+) site. A JAMM motif motif is present at residues 171 to 184; that stretch reads HNHPSGCAEPSKAD.

The protein belongs to the UPF0758 family. YicR subfamily.

This chain is UPF0758 protein YicR, found in Shigella boydii serotype 18 (strain CDC 3083-94 / BS512).